The following is a 638-amino-acid chain: Growth hormone receptor (638 aa).

Residues 1–18 form the signal peptide; the sequence is MDLWQLLLTLALAGSSDA. Residues 19-264 lie on the Extracellular side of the membrane; sequence FSGSEPTAAI…NQFTCEEDFY (246 aa). Residue Asn46 is glycosylated (N-linked (GlcNAc...) asparagine). Cystine bridges form between Cys56–Cys66 and Cys101–Cys112. A glycan (N-linked (GlcNAc...) asparagine) is linked at Asn115. Residues Cys126 and Cys140 are joined by a disulfide bond. The 104-residue stretch at 151-254 folds into the Fibronectin type-III domain; the sequence is PPIALNWTLL…EVLYVTLPQM (104 aa). Asn156, Asn161, and Asn200 each carry an N-linked (GlcNAc...) asparagine glycan. The WSXWS motif motif lies at 240–244; sequence YGEFS. Residues 265–288 traverse the membrane as a helical segment; that stretch reads FPWLLIIIFGIFGLTVMLFVFLFS. The Cytoplasmic portion of the chain corresponds to 289 to 638; the sequence is KQQRIKMLIL…STDQLNKIMP (350 aa). Positions 294 to 379 are required for JAK2 binding; that stretch reads KMLILPPVPV…HQKSHSNLGV (86 aa). A Box 1 motif motif is present at residues 297–305; the sequence is ILPPVPVPK. The short motif at 340–349 is the UbE motif element; the sequence is DSWVEFIELD. Ser341 carries the phosphoserine modification. Residues 353–388 are disordered; the sequence is PDEKNEGSDTDRLLSSDHQKSHSNLGVKDGDSGRTS. The segment covering 356 to 372 has biased composition (basic and acidic residues); the sequence is KNEGSDTDRLLSSDHQK. Phosphotyrosine is present on residues Tyr487 and Tyr595.

The protein belongs to the type I cytokine receptor family. Type 1 subfamily. As to quaternary structure, on growth hormone (GH) binding, forms homodimers and binds JAK2 via a box 1-containing domain. The soluble form (GHBP) is produced by phorbol ester-promoted proteolytic cleavage at the cell surface (shedding) by ADAM17/TACE. Shedding is inhibited by growth hormone (GH) binding to the receptor probably due to a conformational change in GHR rendering the receptor inaccessible to ADAM17. Post-translationally, on GH binding, phosphorylated on tyrosine residues in the cytoplasmic domain by JAK2. In terms of processing, ubiquitinated by the ECS(SOCS2) complex following ligand-binding and phosphorylation by JAK2, leading to its degradation by the proteasome. Regulation by the ECS(SOCS2) complex acts as a negative feedback loop of growth hormone receptor signaling. Ubiquitination is not sufficient for GHR internalization.

The protein localises to the cell membrane. It localises to the secreted. Its function is as follows. Receptor for pituitary gland growth hormone (GH1) involved in regulating postnatal body growth. On ligand binding, couples to the JAK2/STAT5 pathway. In terms of biological role, the soluble form (GHBP) acts as a reservoir of growth hormone in plasma and may be a modulator/inhibitor of GH signaling. This Papio anubis (Olive baboon) protein is Growth hormone receptor (GHR).